The primary structure comprises 449 residues: Lysine-sensitive aspartokinase 3 (449 aa).

An aspartokinase region spans residues 2–245; it reads SEIVVSKFGG…AAKRIDEIAF (244 aa). Position 8–11 (8–11) interacts with ATP; the sequence is KFGG. Substrate-binding positions include Thr-45, Glu-119, and 198–201; that span reads RGGS. ATP-binding positions include 221 to 222, Tyr-227, Arg-232, and 257 to 258; these read TD and KV. Residues 246-449 are interface; the sequence is AEAAEMATFG…VQKLHSNLFE (204 aa). Residues 299 to 449 form a required for homodimerization region; the sequence is FRALALRRNQ…VQKLHSNLFE (151 aa). Residues 313–394 form the ACT domain; sequence LHSLNMLHSR…GLALVALIGN (82 aa). L-lysine contacts are provided by residues Met-318, Ser-321, 324–325, 338–340, and 345–346; these read FL, SVD, and SE.

Belongs to the aspartokinase family. Homodimer. In the inactive form a homotetramer is formed.

The enzyme catalyses L-aspartate + ATP = 4-phospho-L-aspartate + ADP. Its pathway is amino-acid biosynthesis; L-lysine biosynthesis via DAP pathway; (S)-tetrahydrodipicolinate from L-aspartate: step 1/4. Its activity is regulated as follows. Synthesis and activity are sensitive to the allosteric inhibitor lysine, one of the end metabolites of the aspartic acid family branched pathway. This Escherichia coli (strain K12) protein is Lysine-sensitive aspartokinase 3 (lysC).